The sequence spans 544 residues: Methionine--tRNA ligase 1 (544 aa).

Residues 10-20 (PYANGSLHLGH) carry the 'HIGH' region motif. Residues C141, C144, C153, and C156 each coordinate Zn(2+). Positions 329 to 333 (KLSTS) match the 'KMSKS' region motif. T332 provides a ligand contact to ATP.

It belongs to the class-I aminoacyl-tRNA synthetase family. MetG type 1 subfamily. As to quaternary structure, monomer. Zn(2+) serves as cofactor.

The protein localises to the cytoplasm. It carries out the reaction tRNA(Met) + L-methionine + ATP = L-methionyl-tRNA(Met) + AMP + diphosphate. Is required not only for elongation of protein synthesis but also for the initiation of all mRNA translation through initiator tRNA(fMet) aminoacylation. This Bacillus cereus (strain ATCC 10987 / NRS 248) protein is Methionine--tRNA ligase 1.